Consider the following 181-residue polypeptide: Transcription termination/antitermination protein NusG (181 aa).

In terms of domain architecture, KOW spans proline 130 to serine 161.

It belongs to the NusG family. As to quaternary structure, monomer. Interacts with the transcription termination factor Rho and with RNA polymerase.

Functionally, participates in transcription elongation, termination and antitermination. In the absence of Rho, increases the rate of transcription elongation by the RNA polymerase (RNAP), probably by partially suppressing pausing. In the presence of Rho, modulates most Rho-dependent termination events by interacting with the RNAP to render the complex more susceptible to the termination activity of Rho. May be required to overcome a kinetic limitation of Rho to function at certain terminators. Also involved in ribosomal RNA transcriptional antitermination. This is Transcription termination/antitermination protein NusG from Shigella flexneri.